A 177-amino-acid chain; its full sequence is MGTAKEKKQQIVAEFKDKLSRAQTVIFSNFSGLTVEDDTILRRKFREANSEYKVYKNTLMTIAAKELGYGDDLIKYFEGPTSVAFGYDDPVAPAKVLVEFMKDHKGIELKAGLVNGKLVTVEEIKALAELPSREELVAKALGSMKAPITNLVFVLSGTLRSLLYALNAVKEKKQAEA.

This sequence belongs to the universal ribosomal protein uL10 family. Part of the ribosomal stalk of the 50S ribosomal subunit. The N-terminus interacts with L11 and the large rRNA to form the base of the stalk. The C-terminus forms an elongated spine to which L12 dimers bind in a sequential fashion forming a multimeric L10(L12)X complex.

Forms part of the ribosomal stalk, playing a central role in the interaction of the ribosome with GTP-bound translation factors. This Thermoanaerobacter sp. (strain X514) protein is Large ribosomal subunit protein uL10.